A 419-amino-acid polypeptide reads, in one-letter code: tRNA (guanine-N(7)-)-methyltransferase non-catalytic subunit wuho (419 aa).

Residues 51 to 61 (STAEQQSAAAE) show a composition bias toward low complexity. The tract at residues 51 to 75 (STAEQQSAAAETGGGSVVEGEEPKD) is disordered. WD repeat units lie at residues 87 to 127 (APTV…AQLV), 174 to 213 (GHLS…DIHS), and 217 to 255 (GHKE…ELLR).

The protein belongs to the WD repeat TRM82 family. As to quaternary structure, forms a heterodimer with the catalytic subunit Mettl1. Interacts with mei-P26 and weakly interacts with bgcn; required for the function or formation of the mei-P26-bgcn-bam-sxl complex. Interacts with nanos; may be involved in mei-P26-dependent derepression of the BMP signaling pathway. Interacts with Myc; the interaction may be mediated by mei-P26 and may be involved in the regulation of ribosome biogenesis. In terms of tissue distribution, in testis, it is present at high level in hub cells, a niche for germline stem cells of testis. Ubiquitously expressed in all testicular cells throughout spermatogenesis. Ubiquitously expressed in all germline and somatic cells of the ovary.

The protein localises to the nucleus. It localises to the cytoplasm. It functions in the pathway tRNA modification; N(7)-methylguanine-tRNA biosynthesis. Required for the Mettl1-dependent formation of N(7)-methylguanine at position 46 (m7G46) in tRNA. In the Mettl1-wuho methyltransferase complex, it is required to stabilize and induce conformational changes of the catalytic subunit. Required for binding of nanos mRNA and repression of translation by the mei-P26-bgcn-bam-sxl complex. May cooperate with mei-P26 and nanos to derepress the BMP signaling pathway. May cooperate with mei-P26 to suppress expression of a subset of microRNAs. May cooperate with mei-P26 to regulate bam expression levels in germline cells during gametogenesis. Required to promote mitosis to meiosis transition during gametogenesis. May regulate germline cell division in part by regulating ribosome biogenesis. This chain is tRNA (guanine-N(7)-)-methyltransferase non-catalytic subunit wuho, found in Drosophila willistoni (Fruit fly).